The chain runs to 234 residues: Endonuclease V (234 aa).

The Mg(2+) site is built by aspartate 46 and aspartate 116.

This sequence belongs to the endonuclease V family. Mg(2+) is required as a cofactor.

It localises to the cytoplasm. It carries out the reaction Endonucleolytic cleavage at apurinic or apyrimidinic sites to products with a 5'-phosphate.. Its function is as follows. DNA repair enzyme involved in the repair of deaminated bases. Selectively cleaves double-stranded DNA at the second phosphodiester bond 3' to a deoxyinosine leaving behind the intact lesion on the nicked DNA. The polypeptide is Endonuclease V (Clostridium acetobutylicum (strain ATCC 824 / DSM 792 / JCM 1419 / IAM 19013 / LMG 5710 / NBRC 13948 / NRRL B-527 / VKM B-1787 / 2291 / W)).